Reading from the N-terminus, the 119-residue chain is UPF0342 protein Athe_0692 (119 aa).

It belongs to the UPF0342 family.

The sequence is that of UPF0342 protein Athe_0692 from Caldicellulosiruptor bescii (strain ATCC BAA-1888 / DSM 6725 / KCTC 15123 / Z-1320) (Anaerocellum thermophilum).